Consider the following 372-residue polypeptide: L-selectin (372 aa).

Residues 1 to 28 (MVFPWRCEGTYWGSRNILKLWVWTLLCC) form the signal peptide. Residues 29 to 38 (DFLIHHGTHC) constitute a propeptide that is removed on maturation. Over 39-332 (WTYHYSEKPM…FSKIKEGDYN (294 aa)) the chain is Extracellular. Residues 55–155 (KFCKQNYTDL…ACHKRKAALC (101 aa)) enclose the C-type lectin domain. 10 cysteine pairs are disulfide-bonded: Cys57-Cys155, Cys128-Cys147, Cys128-Cys160, Cys160-Cys171, Cys165-Cys180, Cys182-Cys191, Cys197-Cys241, Cys227-Cys254, Cys259-Cys303, and Cys289-Cys316. N-linked (GlcNAc...) asparagine glycans are attached at residues Asn60 and Asn104. Ca(2+) is bound by residues Glu118, Asn120, Glu126, Asn143, and Asp144. The 37-residue stretch at 156 to 192 (YTASCQPGSCNGRGECVETINNHTCICDAGYYGPQCQ) folds into the EGF-like domain. N-linked (GlcNAc...) asparagine glycosylation is present at Asn177. Sushi domains follow at residues 195–256 (VQCE…ICQV) and 257–318 (VQCE…ICQE). Residues Asn216, Asn226, Asn246, Asn278, Asn288, Asn308, and Asn320 are each glycosylated (N-linked (GlcNAc...) asparagine). The chain crosses the membrane as a helical span at residues 333–355 (PLFIPVAVMVTAFSGLAFLIWLA). Residues 356-372 (RRLKKGKKSQERMDDPY) lie on the Cytoplasmic side of the membrane.

It belongs to the selectin/LECAM family. As to quaternary structure, interaction with SELPLG/PSGL1 and PODXL2 is required for promoting recruitment and rolling of leukocytes. This interaction is dependent on the sialyl Lewis X glycan modification of SELPLG and PODXL2, and tyrosine sulfation modifications of SELPLG. Sulfation on 'Tyr-51' of SELPLG is important for L-selectin binding. In terms of processing, N-glycosylated. Predominantly expressed in lymphoid tissue.

It is found in the cell membrane. Calcium-dependent lectin that mediates cell adhesion by binding to glycoproteins on neighboring cells. Mediates the adherence of lymphocytes to endothelial cells of high endothelial venules in peripheral lymph nodes. Promotes initial tethering and rolling of leukocytes in endothelia. The polypeptide is L-selectin (Sell) (Mus musculus (Mouse)).